Reading from the N-terminus, the 186-residue chain is dCTP deaminase (186 aa).

A dCTP-binding site is contributed by 107–112; the sequence is KSTYAR. The active-site Proton donor/acceptor is glutamate 133. 3 residues coordinate dCTP: glutamine 152, tyrosine 166, and glutamine 176.

Belongs to the dCTP deaminase family. Homotrimer.

The enzyme catalyses dCTP + H2O + H(+) = dUTP + NH4(+). It participates in pyrimidine metabolism; dUMP biosynthesis; dUMP from dCTP (dUTP route): step 1/2. Catalyzes the deamination of dCTP to dUTP. This chain is dCTP deaminase, found in Campylobacter jejuni subsp. jejuni serotype O:2 (strain ATCC 700819 / NCTC 11168).